The following is a 143-amino-acid chain: Spore coat protein P (143 aa).

Positions 34 to 143 constitute a sHSP domain; that stretch reads FFDSEASTFV…VETVAFNKGL (110 aa).

The protein belongs to the small heat shock protein (HSP20) family.

The sequence is that of Spore coat protein P (cotP) from Bacillus subtilis (strain 168).